A 78-amino-acid polypeptide reads, in one-letter code: Putative membrane protein insertion efficiency factor (78 aa).

Belongs to the UPF0161 family.

The protein localises to the cell inner membrane. Functionally, could be involved in insertion of integral membrane proteins into the membrane. The protein is Putative membrane protein insertion efficiency factor of Roseobacter denitrificans (strain ATCC 33942 / OCh 114) (Erythrobacter sp. (strain OCh 114)).